Here is a 386-residue protein sequence, read N- to C-terminus: Glucose-1-phosphate adenylyltransferase (386 aa).

Alpha-D-glucose 1-phosphate is bound by residues Tyr-100, Gly-165, 180 to 181 (EK), and Ser-191.

This sequence belongs to the bacterial/plant glucose-1-phosphate adenylyltransferase family. As to quaternary structure, homotetramer.

The enzyme catalyses alpha-D-glucose 1-phosphate + ATP + H(+) = ADP-alpha-D-glucose + diphosphate. Its pathway is glycan biosynthesis; glycogen biosynthesis. Functionally, involved in the biosynthesis of ADP-glucose, a building block required for the elongation reactions to produce glycogen. Catalyzes the reaction between ATP and alpha-D-glucose 1-phosphate (G1P) to produce pyrophosphate and ADP-Glc. The sequence is that of Glucose-1-phosphate adenylyltransferase from Clostridium botulinum (strain Eklund 17B / Type B).